A 437-amino-acid chain; its full sequence is Bile acid CoA-transferase BaiK (437 aa).

Asp-171 acts as the Nucleophile in catalysis.

Belongs to the CoA-transferase III family.

The catalysed reaction is deoxycholoyl-CoA + cholate = choloyl-CoA + deoxycholate. The enzyme catalyses allodeoxycholoyl-CoA + cholate = allodeoxycholate + choloyl-CoA. It catalyses the reaction allocholate + deoxycholoyl-CoA = allocholoyl-CoA + deoxycholate. It carries out the reaction allocholate + allodeoxycholoyl-CoA = allocholoyl-CoA + allodeoxycholate. The catalysed reaction is ursodeoxycholate + deoxycholoyl-CoA = ursodeoxycholoyl-CoA + deoxycholate. The enzyme catalyses allodeoxycholoyl-CoA + ursodeoxycholate = ursodeoxycholoyl-CoA + allodeoxycholate. It functions in the pathway lipid metabolism; bile acid biosynthesis. Functions in the bile acid 7alpha-dehydroxylation pathway, which forms secondary bile acids via the 7alpha-dehydroxylation of primary bile acids, and is carried out by intestinal anaerobic bacteria. Acts as a bile acid CoA transferase with broad bile acid substrate specificity. Catalyzes the transfer of the CoA moiety of secondary bile acid-CoA compounds to primary bile acids. Can use deoxycholoyl-CoA and allodeoxycholoyl-CoA as bile acid CoA donors and cholate, allocholate and ursodeoxycholate as bile acid CoA acceptors. Shows no activity when lithocholoyl-CoA is used as the CoA donor. The polypeptide is Bile acid CoA-transferase BaiK (Clostridium scindens (strain JCM 10418 / VPI 12708)).